A 459-amino-acid chain; its full sequence is Vanillin aminotransferase (459 aa).

Pyridoxal 5'-phosphate-binding positions include 115 to 116 (GS) and Asp255. Position 284 is an N6-(pyridoxal phosphate)lysine (Lys284). Pyridoxal 5'-phosphate is bound at residue 320 to 321 (FT). Residues 428-459 (LSLEELDELIRIYGKALKDTEKRVEELKSQKK) adopt a coiled-coil conformation.

It belongs to the class-III pyridoxal-phosphate-dependent aminotransferase family. In terms of tissue distribution, expressed in placental tissue of immature fruit.

The catalysed reaction is vanillin + L-alanine = vanillylamine + pyruvate. The protein operates within aromatic compound metabolism; phenylpropanoid biosynthesis. Involved in the biosynthesis of capsaicinoids natural products, pungent alkaloids synthesized from phenylpropanoid intermediates in the placental tissue of chili pepper fruit acting as repellant on herbivorous mammals and conferring spiciness to hot peppers. Can transfer an amine from vanillylamine to pyruvate forming vanillin and L-alanine. Can use pyruvate or oxaloacetate, but not 2-oxoglutarate as amino group acceptors. Is able to convert (S)-1-phenylethylamine into acetophenone in vitro. The protein is Vanillin aminotransferase of Capsicum chinense (Scotch bonnet).